Reading from the N-terminus, the 225-residue chain is Type II restriction enzyme BslI subunit alpha (225 aa).

2 C4-type zinc fingers span residues 36–53 (CKDC…CYFC) and 63–84 (CNSC…TDGC).

As to quaternary structure, heterotetramer of two alpha and two beta subunits. The alpha subunit is believed to be responsible for DNA recognition, while the beta subunit is thought to mediate cleavage. Zn(2+) serves as cofactor.

The enzyme catalyses Endonucleolytic cleavage of DNA to give specific double-stranded fragments with terminal 5'-phosphates.. A P subtype restriction enzyme that recognizes the double-stranded sequence 5'-CCN(7)GG-3' and cleaves after N-7. In Bacillus sp. (strain NEB-606), this protein is Type II restriction enzyme BslI subunit alpha.